A 211-amino-acid polypeptide reads, in one-letter code: Thymidylate kinase (211 aa).

Gly-11 to Thr-18 provides a ligand contact to ATP.

Belongs to the thymidylate kinase family.

It carries out the reaction dTMP + ATP = dTDP + ADP. In terms of biological role, phosphorylation of dTMP to form dTDP in both de novo and salvage pathways of dTTP synthesis. The sequence is that of Thymidylate kinase from Streptococcus equi subsp. equi (strain 4047).